Reading from the N-terminus, the 130-residue chain is Small ribosomal subunit protein uS9 (130 aa).

Positions T105–R130 are disordered. Residues K111–R130 show a composition bias toward basic residues.

This sequence belongs to the universal ribosomal protein uS9 family.

In Syntrophomonas wolfei subsp. wolfei (strain DSM 2245B / Goettingen), this protein is Small ribosomal subunit protein uS9.